The chain runs to 100 residues: Omega-hexatoxin-Asp2b (100 aa).

An N-terminal signal peptide occupies residues 1–23 (MKFSKLSITLAVILTQAVFVLCG). A propeptide spanning residues 24-55 (MKNEDFMEKGLESNELHDAIKKPVNSGKPDTE) is cleaved from the precursor. Cystine bridges form between cysteine 60/cysteine 73, cysteine 66/cysteine 79, and cysteine 72/cysteine 84.

The protein belongs to the neurotoxin 15 family. 02 (omega-actx) subfamily. As to expression, expressed by the venom gland.

It localises to the secreted. In terms of biological role, potent inhibitor of insect, but not mammalian, voltage-gated calcium channels (Cav). This is Omega-hexatoxin-Asp2b from Atrax sp. (strain Illawarra) (Funnel-web spider).